Here is a 427-residue protein sequence, read N- to C-terminus: Serine--tRNA ligase (427 aa).

233–235 (TGE) lines the L-serine pocket. ATP is bound at residue 264–266 (RSE). Glu287 contacts L-serine. Residue 351–354 (EVSS) coordinates ATP. Ser387 provides a ligand contact to L-serine.

It belongs to the class-II aminoacyl-tRNA synthetase family. Type-1 seryl-tRNA synthetase subfamily. Homodimer. The tRNA molecule binds across the dimer.

Its subcellular location is the cytoplasm. It carries out the reaction tRNA(Ser) + L-serine + ATP = L-seryl-tRNA(Ser) + AMP + diphosphate + H(+). The enzyme catalyses tRNA(Sec) + L-serine + ATP = L-seryl-tRNA(Sec) + AMP + diphosphate + H(+). Its pathway is aminoacyl-tRNA biosynthesis; selenocysteinyl-tRNA(Sec) biosynthesis; L-seryl-tRNA(Sec) from L-serine and tRNA(Sec): step 1/1. Functionally, catalyzes the attachment of serine to tRNA(Ser). Is also able to aminoacylate tRNA(Sec) with serine, to form the misacylated tRNA L-seryl-tRNA(Sec), which will be further converted into selenocysteinyl-tRNA(Sec). The chain is Serine--tRNA ligase from Buchnera aphidicola subsp. Acyrthosiphon pisum (strain 5A).